The primary structure comprises 616 residues: Chaperone protein HscA homolog (616 aa).

It belongs to the heat shock protein 70 family.

Chaperone involved in the maturation of iron-sulfur cluster-containing proteins. Has a low intrinsic ATPase activity which is markedly stimulated by HscB. The polypeptide is Chaperone protein HscA homolog (Tolumonas auensis (strain DSM 9187 / NBRC 110442 / TA 4)).